The following is a 298-amino-acid chain: PYK10-binding protein 1 (298 aa).

The residue at position 2 (Ala2) is an N-acetylalanine. Jacalin-type lectin domains follow at residues 2-142 (AQKV…YFAP) and 152-295 (AKQL…HVRP). Ser20 carries the post-translational modification Phosphoserine.

It belongs to the jacalin lectin family. In terms of assembly, component of the PYK10 complex, at least composed of PYK10/BGLU23, BGLU21, BGLU22, JAL22, JAL23, PBP1/JAL30, PBP2/JAL31, JAL32, JAL33, JAL34, JAL35, GLL22 and GLL23. As to expression, expressed exclusively in roots.

The protein localises to the cytoplasm. Functionally, inhibitor-type lectin that may regulate the correct polymerization of BGLU23/PYK10 upon tissue damage. Activates BGLU21, BGLU22 and BGLU23. This chain is PYK10-binding protein 1 (PBP1), found in Arabidopsis thaliana (Mouse-ear cress).